The following is a 60-amino-acid chain: Large ribosomal subunit protein uL30 (60 aa).

The protein belongs to the universal ribosomal protein uL30 family. Part of the 50S ribosomal subunit.

In Leuconostoc citreum (strain KM20), this protein is Large ribosomal subunit protein uL30.